We begin with the raw amino-acid sequence, 1108 residues long: Retinal guanylyl cyclase 2 (1108 aa).

A signal peptide spans 1–50; sequence MFLGLGRFSRLVLWFAAFRKLLGHHGLASAKFLWCLCLLSVMSLPQQVWT. At 51–467 the chain is on the extracellular side; the sequence is LPYKIGVVGP…KICHGGIDPA (417 aa). An intrachain disulfide couples C104 to C132. A helical transmembrane segment spans residues 468-490; the sequence is FAMMVCLTLLIALLSINGFAYFI. The Cytoplasmic segment spans residues 491–1108; it reads RRRINKIQLI…AERQLVRNKP (618 aa). Residues 532–812 enclose the Protein kinase domain; sequence FQITSEVQSG…DEIFNQFKTF (281 aa). The region spanning 884–1014 is the Guanylate cyclase domain; the sequence is TLYFSDIVGF…DTVNTASRME (131 aa).

This sequence belongs to the adenylyl cyclase class-4/guanylyl cyclase family. In terms of assembly, homodimer. Interacts with RD3; promotes the exit of GUCY2F from the endoplasmic reticulum and its trafficking to the photoreceptor outer segments. Post-translationally, there are 9 conserved cysteine residues in sensory guanylate cyclases, 6 in the extracellular domain, which may be involved in intra- or interchain disulfide bonds. In terms of tissue distribution, retina. Localized exclusively in the outer nuclear layer and inner segments of the rod and cone photoreceptor cells.

Its subcellular location is the photoreceptor outer segment membrane. The enzyme catalyses GTP = 3',5'-cyclic GMP + diphosphate. Activated by GUCA1B when free calcium ions concentration is low, and inhibited by GUCA1B when free calcium ions concentration is high. Inhibited by RD3. Responsible for the synthesis of cyclic GMP (cGMP) in rods and cones of photoreceptors. Plays an essential role in phototransduction, by mediating cGMP replenishment. May also participate in the trafficking of membrane-asociated proteins to the photoreceptor outer segment membrane. This chain is Retinal guanylyl cyclase 2 (GUCY2F), found in Homo sapiens (Human).